The following is a 267-amino-acid chain: 14-3-3-like protein GF14 chi (267 aa).

A2 is subject to N-acetylalanine. A phosphoserine mark is found at S72 and S195. Position 216 is a phosphothreonine (T216). A Phosphoserine modification is found at S267.

Belongs to the 14-3-3 family. As to quaternary structure, interacts with TPK1. Interacts with the isocitrate dehydrogenase IDH3, and malate dehydrogenases MDH1 and MDH2. Interacts with DREB1A and DREB1B in the nucleus. Interacts with CINV1.

The protein localises to the nucleus. Its subcellular location is the cytoplasm. Its function is as follows. Is associated with a DNA binding complex that binds to the G box, a well-characterized cis-acting DNA regulatory element found in plant genes. Involved in the regulation of nutrient metabolism. The chain is 14-3-3-like protein GF14 chi (GRF1) from Arabidopsis thaliana (Mouse-ear cress).